A 402-amino-acid chain; its full sequence is Propionate kinase (402 aa).

2 residues coordinate ATP: Asn-11 and Lys-18. Asn-11 is a binding site for Mg(2+). Arg-86 contributes to the substrate binding site. Asp-143 serves as the catalytic Proton donor/acceptor. ATP contacts are provided by residues His-175, 203-207 (HLGNG), 278-280 (DLR), and 326-330 (GIGEN).

Belongs to the acetokinase family. TdcD subfamily. In terms of assembly, homodimer. It depends on Mg(2+) as a cofactor.

It catalyses the reaction propanoate + ATP = propanoyl phosphate + ADP. The protein operates within amino-acid degradation; L-threonine degradation via propanoate pathway; propanoate from L-threonine: step 4/4. In terms of biological role, catalyzes the conversion of propionyl phosphate and ADP to propionate and ATP. This Enterobacter sp. (strain 638) protein is Propionate kinase.